A 344-amino-acid polypeptide reads, in one-letter code: Interferon gamma receptor 1-like (344 aa).

Positions 1-22 (MSKHAVVQFGVVYALLFPGVFG) are cleaved as a signal peptide. Residues 23–229 (FVPSPTNVSV…QPTPETDKTG (207 aa)) are Extracellular-facing. A Fibronectin type-III domain is found at 24-102 (VPSPTNVSVV…TAHDGQEKSE (79 aa)). N-linked (GlcNAc...) asparagine glycosylation is found at Asn-29, Asn-44, Asn-132, and Asn-189. Residues 230-250 (IIAALIGGATVVLFIIMGFVW) form a helical membrane-spanning segment. Residues 251–344 (LLWRKWSNIP…SSDYDRPKFL (94 aa)) are Cytoplasmic-facing. The segment at 300 to 344 (TEEDQSVSARDDTGADPPVVSEEGMAGEDSQGLGCSSDYDRPKFL) is disordered.

The protein belongs to the type II cytokine receptor family. As to expression, highly expressed in brain. Also detected in spleen, heart, intestine, gill and kidney. In immune cell populations, detected at low levels in monocytes, peripheral blood leukocytes, splenocytes, neutrophils and mature macrophages.

It is found in the cell membrane. Receptor which shows binding specificity for the cytokine ifng1 (interferon gamma 1). In Carassius auratus (Goldfish), this protein is Interferon gamma receptor 1-like.